We begin with the raw amino-acid sequence, 158 residues long: Protein Smg homolog (158 aa).

The protein belongs to the Smg family.

This is Protein Smg homolog from Coxiella burnetii (strain Dugway 5J108-111).